Reading from the N-terminus, the 721-residue chain is Fatty acid oxidation complex subunit alpha (721 aa).

Residues 1-190 (MIYEGKAITV…KVGAVDAVVA (190 aa)) form an enoyl-CoA hydratase/isomerase region. D297 contacts substrate. Residues 312–721 (KDVKQAAVLG…SFFGQASSEE (410 aa)) form a 3-hydroxyacyl-CoA dehydrogenase region. NAD(+) is bound by residues M325, D344, 401–403 (VVE), K408, and S430. H451 acts as the For 3-hydroxyacyl-CoA dehydrogenase activity in catalysis. Position 454 (N454) interacts with NAD(+). N501 and Y660 together coordinate substrate.

This sequence in the N-terminal section; belongs to the enoyl-CoA hydratase/isomerase family. In the C-terminal section; belongs to the 3-hydroxyacyl-CoA dehydrogenase family. As to quaternary structure, heterotetramer of two alpha chains (FadB) and two beta chains (FadA).

The catalysed reaction is a (3S)-3-hydroxyacyl-CoA + NAD(+) = a 3-oxoacyl-CoA + NADH + H(+). It carries out the reaction a (3S)-3-hydroxyacyl-CoA = a (2E)-enoyl-CoA + H2O. The enzyme catalyses a 4-saturated-(3S)-3-hydroxyacyl-CoA = a (3E)-enoyl-CoA + H2O. It catalyses the reaction (3S)-3-hydroxybutanoyl-CoA = (3R)-3-hydroxybutanoyl-CoA. The catalysed reaction is a (3Z)-enoyl-CoA = a 4-saturated (2E)-enoyl-CoA. It carries out the reaction a (3E)-enoyl-CoA = a 4-saturated (2E)-enoyl-CoA. The protein operates within lipid metabolism; fatty acid beta-oxidation. Its function is as follows. Involved in the aerobic and anaerobic degradation of long-chain fatty acids via beta-oxidation cycle. Catalyzes the formation of 3-oxoacyl-CoA from enoyl-CoA via L-3-hydroxyacyl-CoA. It can also use D-3-hydroxyacyl-CoA and cis-3-enoyl-CoA as substrate. The protein is Fatty acid oxidation complex subunit alpha of Pseudomonas syringae pv. syringae (strain B728a).